The chain runs to 94 residues: Large ribosomal subunit protein bL28 (94 aa).

The protein belongs to the bacterial ribosomal protein bL28 family.

This chain is Large ribosomal subunit protein bL28, found in Hyphomonas neptunium (strain ATCC 15444).